A 295-amino-acid polypeptide reads, in one-letter code: Protoheme IX farnesyltransferase (295 aa).

The next 9 helical transmembrane spans lie at 9–29 (ITKPGIIFGNVLSVAGGFFLA), 36–56 (FGVFLAAVIGTSLVVASGCVF), 80–100 (LVSLKLALLYATLLGIAGVAL), 108–128 (LAALFAVIGFVIYVGFYSLYL), 135–155 (GTLVGSLSGAMPPVIGYCAVS), 163–183 (LTLLVMFSLWQMPHSYAIAIF), 209–229 (ILLYILAFLVATLMLTVGGYA), 230–250 (GLNYLAVAAGMGMYWLYMAWK), and 265–285 (FVFSIFTITALSVMMSVDFQV).

It belongs to the UbiA prenyltransferase family. Protoheme IX farnesyltransferase subfamily.

The protein resides in the cell inner membrane. It carries out the reaction heme b + (2E,6E)-farnesyl diphosphate + H2O = Fe(II)-heme o + diphosphate. It functions in the pathway porphyrin-containing compound metabolism; heme O biosynthesis; heme O from protoheme: step 1/1. Its function is as follows. Converts heme B (protoheme IX) to heme O by substitution of the vinyl group on carbon 2 of heme B porphyrin ring with a hydroxyethyl farnesyl side group. The polypeptide is Protoheme IX farnesyltransferase (Pseudomonas syringae pv. tomato (strain ATCC BAA-871 / DC3000)).